The sequence spans 378 residues: Chaperone protein DnaJ (378 aa).

A J domain is found at 5-69 (EFYDRLGVSK…QKRAAYDQYG (65 aa)). The segment at 135–217 (GTEKEVKYHR…CHGTGHEKQA (83 aa)) adopts a CR-type zinc-finger fold. The Zn(2+) site is built by cysteine 148, cysteine 151, cysteine 165, cysteine 168, cysteine 191, cysteine 194, cysteine 205, and cysteine 208. 4 CXXCXGXG motif repeats span residues 148–155 (CRTCNGSG), 165–172 (CGRCHGAG), 191–198 (CDVCHGRG), and 205–212 (CTTCHGTG).

Belongs to the DnaJ family. In terms of assembly, homodimer. The cofactor is Zn(2+).

It is found in the cytoplasm. Participates actively in the response to hyperosmotic and heat shock by preventing the aggregation of stress-denatured proteins and by disaggregating proteins, also in an autonomous, DnaK-independent fashion. Unfolded proteins bind initially to DnaJ; upon interaction with the DnaJ-bound protein, DnaK hydrolyzes its bound ATP, resulting in the formation of a stable complex. GrpE releases ADP from DnaK; ATP binding to DnaK triggers the release of the substrate protein, thus completing the reaction cycle. Several rounds of ATP-dependent interactions between DnaJ, DnaK and GrpE are required for fully efficient folding. Also involved, together with DnaK and GrpE, in the DNA replication of plasmids through activation of initiation proteins. This chain is Chaperone protein DnaJ, found in Streptococcus pneumoniae serotype 4 (strain ATCC BAA-334 / TIGR4).